The primary structure comprises 247 residues: Uridylate kinase (247 aa).

Position 15–18 (15–18 (KLSG)) interacts with ATP. The tract at residues 23 to 28 (GEEGFG) is involved in allosteric activation by GTP. Glycine 57 is a UMP binding site. Glycine 58 and arginine 62 together coordinate ATP. UMP-binding positions include aspartate 77 and 138 to 145 (TGNPFFTT). Positions 165, 171, and 174 each coordinate ATP.

The protein belongs to the UMP kinase family. As to quaternary structure, homohexamer.

Its subcellular location is the cytoplasm. It carries out the reaction UMP + ATP = UDP + ADP. It functions in the pathway pyrimidine metabolism; CTP biosynthesis via de novo pathway; UDP from UMP (UMPK route): step 1/1. Its activity is regulated as follows. Allosterically activated by GTP. Inhibited by UTP. Its function is as follows. Catalyzes the reversible phosphorylation of UMP to UDP. This chain is Uridylate kinase, found in Pseudoalteromonas atlantica (strain T6c / ATCC BAA-1087).